We begin with the raw amino-acid sequence, 233 residues long: Protein FAM204A (233 aa).

Positions 1–126 (MWSGLLPPGL…HSEPSSNETQ (126 aa)) are disordered. The segment covering 13–24 (SDAESNSEDEAT) has biased composition (acidic residues). Residues 39–58 (ESIRKTEIIDFSTDEPKTET) are compositionally biased toward basic and acidic residues. Over residues 97-109 (FRGKRRKRSRKDK) the composition is skewed to basic residues. Positions 144 to 164 (VKRKKVEKSGLEKRIDQAVEE) form a coiled coil.

The chain is Protein FAM204A (FAM204A) from Homo sapiens (Human).